The sequence spans 171 residues: O-acetyl-ADP-ribose deacetylase 1 (171 aa).

Residues 1–171 (MKKITVIQGD…NYDLYLKLLN (171 aa)) form the Macro domain. Substrate is bound by residues 10–11 (DI), asparagine 24, 32–34 (GVD), and 121–125 (STGIY). Aspartate 34 acts as the Proton acceptor in catalysis.

It belongs to the MacroD-type family. YmdB subfamily. In terms of assembly, homodimer. Interacts with RNase III.

It catalyses the reaction 3''-O-acetyl-ADP-D-ribose + H2O = ADP-D-ribose + acetate + H(+). The enzyme catalyses 2''-O-acetyl-ADP-D-ribose + H2O = ADP-D-ribose + acetate + H(+). Its function is as follows. Deacetylates O-acetyl-ADP ribose to yield ADP-ribose and free acetate. Down-regulates ribonuclease 3 (RNase III) activity. Acts by interacting directly with the region of the ribonuclease that is required for dimerization/activation. This Pantoea vagans (strain C9-1) (Pantoea agglomerans (strain C9-1)) protein is O-acetyl-ADP-ribose deacetylase 1.